Here is a 180-residue protein sequence, read N- to C-terminus: NAD(P)H-quinone oxidoreductase subunit J (180 aa).

A compositionally biased stretch (polar residues) spans 1-16 (MNEETQTSELTNTDQG). Positions 1 to 23 (MNEETQTSELTNTDQGPQIEPGP) are disordered.

It belongs to the complex I 30 kDa subunit family. In terms of assembly, NDH-1 can be composed of about 15 different subunits; different subcomplexes with different compositions have been identified which probably have different functions.

The protein resides in the cellular thylakoid membrane. It catalyses the reaction a plastoquinone + NADH + (n+1) H(+)(in) = a plastoquinol + NAD(+) + n H(+)(out). It carries out the reaction a plastoquinone + NADPH + (n+1) H(+)(in) = a plastoquinol + NADP(+) + n H(+)(out). Functionally, NDH-1 shuttles electrons from an unknown electron donor, via FMN and iron-sulfur (Fe-S) centers, to quinones in the respiratory and/or the photosynthetic chain. The immediate electron acceptor for the enzyme in this species is believed to be plastoquinone. Couples the redox reaction to proton translocation, and thus conserves the redox energy in a proton gradient. Cyanobacterial NDH-1 also plays a role in inorganic carbon-concentration. This is NAD(P)H-quinone oxidoreductase subunit J from Prochlorococcus marinus (strain MIT 9211).